The chain runs to 133 residues: Small ribosomal subunit protein uS8 (133 aa).

The protein belongs to the universal ribosomal protein uS8 family. As to quaternary structure, part of the 30S ribosomal subunit. Contacts proteins S5 and S12.

One of the primary rRNA binding proteins, it binds directly to 16S rRNA central domain where it helps coordinate assembly of the platform of the 30S subunit. The chain is Small ribosomal subunit protein uS8 from Micrococcus luteus (Micrococcus lysodeikticus).